The following is a 282-amino-acid chain: Pantothenate synthetase (282 aa).

30-37 (MGYLHQGH) contacts ATP. The active-site Proton donor is the His-37. Gln-61 serves as a coordination point for (R)-pantoate. Gln-61 serves as a coordination point for beta-alanine. 147–150 (GQKD) provides a ligand contact to ATP. Gln-153 lines the (R)-pantoate pocket. Residues Val-176 and 184-187 (MSSR) contribute to the ATP site.

Belongs to the pantothenate synthetase family. As to quaternary structure, homodimer.

The protein resides in the cytoplasm. It catalyses the reaction (R)-pantoate + beta-alanine + ATP = (R)-pantothenate + AMP + diphosphate + H(+). It functions in the pathway cofactor biosynthesis; (R)-pantothenate biosynthesis; (R)-pantothenate from (R)-pantoate and beta-alanine: step 1/1. Catalyzes the condensation of pantoate with beta-alanine in an ATP-dependent reaction via a pantoyl-adenylate intermediate. The polypeptide is Pantothenate synthetase (Geotalea daltonii (strain DSM 22248 / JCM 15807 / FRC-32) (Geobacter daltonii)).